We begin with the raw amino-acid sequence, 745 residues long: MALPKTIMAFIAFISFLVSTTFAVDVFSTTNVVTYWGQGHDQKRLSHYCQQAEHDIIVIGFVNVFPDQGKGGWPGTNFGNQCFMGTYITPEGEETELLSSCHKIIEDIPICKAAGKTIMLSLGGQAVDGSKTYSVKTRQSAVYFADFLWRAFGPVSPEWDGPRPFGDNVIDGFDFDIEANGGANYEYMVERLRSNFATDSSRQYYLSAAPQCVLPDGNLGNVISSSAFDFIFVQFYNTPSCSAFNWAQNPSKSGFTFDSWVQFIRKGASRNAKLFIGLVGDHTRVSPHGEYTKDDSNYLALPDADKLIKAYMNKYRANFGGVMIWDALTSDENKLVTGTYSSNIKRLLLNNDPSRPTTTSKTMSSTKTSMSTTTSKYTVTTSTISSTSKISSSTWSMPTMTTSTRTTSSTATRSSTIVTPSTSPNPTTSTSTTSGHQNTTATTTEIETQTSKTFITTTSIWSSGTGIGTCTGIPTITTTPRYPNATFTSDTTGSPTMSDTTITLSVTSSMHQISDTTTTIPTFSTTPIQTSDISLSMPSGTTTSKHQSSGITIPGPPHMSTTIVPASPTKPGHSTTTAIVTTTFTSVCPTGITTVTTTYTTIYCPEATPMPTAGNPPPPPGMEWTTIVTTCTKCASTSAIMTVTYPVTVPSEPMTPTQVPGTLPPPGAPGTGSGIPPPKTPSNEPGSPGTLTGIFPPKPTMSVPPEMGGNGGDRTPVYTGGAGVVSPSFSVVVIVLGSIVYHIMQ.

Positions 1 to 23 (MALPKTIMAFIAFISFLVSTTFA) are cleaved as a signal peptide. The GH18 domain maps to 30-351 (TNVVTYWGQG…SNIKRLLLNN (322 aa)). E178 (proton donor) is an active-site residue. Disordered regions lie at residues 351–372 (NDPSRPTTTSKTMSSTKTSMST) and 395–446 (WSMP…TTEI). Over residues 357–372 (TTTSKTMSSTKTSMST) the composition is skewed to low complexity. N-linked (GlcNAc...) asparagine glycans are attached at residues N438 and N484. The interval 651–715 (SEPMTPTQVP…EMGGNGGDRT (65 aa)) is disordered. G720 carries GPI-anchor amidated glycine lipidation. A propeptide spans 721-745 (GAGVVSPSFSVVVIVLGSIVYHIMQ) (removed in mature form).

The protein belongs to the glycosyl hydrolase 18 family. Chitinase class III subfamily.

Its subcellular location is the cell membrane. It localises to the secreted. It is found in the cell wall. It catalyses the reaction Random endo-hydrolysis of N-acetyl-beta-D-glucosaminide (1-&gt;4)-beta-linkages in chitin and chitodextrins.. In terms of biological role, GPI-anchored chitinase involved in the degradation of chitin, a component of the cell walls of fungi and exoskeletal elements of some animals (including worms and arthropods). Required to reshape the cell wall at the sites where cell wall remodeling and/or cell wall maturation actively take place such as sites of conidia formation. This Arthroderma benhamiae (strain ATCC MYA-4681 / CBS 112371) (Trichophyton mentagrophytes) protein is Probable endochitinase ARB_07371.